Reading from the N-terminus, the 444-residue chain is Phosphoglucosamine mutase (444 aa).

Catalysis depends on Ser104, which acts as the Phosphoserine intermediate. Mg(2+) is bound by residues Ser104, Asp243, Asp245, and Asp247. A Phosphoserine modification is found at Ser104.

This sequence belongs to the phosphohexose mutase family. Mg(2+) is required as a cofactor. In terms of processing, activated by phosphorylation.

It carries out the reaction alpha-D-glucosamine 1-phosphate = D-glucosamine 6-phosphate. Catalyzes the conversion of glucosamine-6-phosphate to glucosamine-1-phosphate. In Neisseria meningitidis serogroup C (strain 053442), this protein is Phosphoglucosamine mutase.